Consider the following 284-residue polypeptide: 2-dehydro-3-deoxyphosphooctonate aldolase (284 aa).

Belongs to the KdsA family.

The protein localises to the cytoplasm. It catalyses the reaction D-arabinose 5-phosphate + phosphoenolpyruvate + H2O = 3-deoxy-alpha-D-manno-2-octulosonate-8-phosphate + phosphate. It participates in carbohydrate biosynthesis; 3-deoxy-D-manno-octulosonate biosynthesis; 3-deoxy-D-manno-octulosonate from D-ribulose 5-phosphate: step 2/3. Its pathway is bacterial outer membrane biogenesis; lipopolysaccharide biosynthesis. This chain is 2-dehydro-3-deoxyphosphooctonate aldolase, found in Escherichia coli O157:H7.